A 152-amino-acid chain; its full sequence is UPF0311 protein blr7842 (152 aa).

Belongs to the UPF0311 family.

This is UPF0311 protein blr7842 from Bradyrhizobium diazoefficiens (strain JCM 10833 / BCRC 13528 / IAM 13628 / NBRC 14792 / USDA 110).